Reading from the N-terminus, the 691-residue chain is Threonine--tRNA ligase (691 aa).

In terms of domain architecture, TGS spans 1–69 (MSTPEITPAA…QQDVEVAAVP (69 aa)). The interval 268-574 (DHRRLGQELD…LLEHYAGAFP (307 aa)) is catalytic. Cys-373, His-424, and His-551 together coordinate Zn(2+).

It belongs to the class-II aminoacyl-tRNA synthetase family. Homodimer. It depends on Zn(2+) as a cofactor.

It is found in the cytoplasm. It carries out the reaction tRNA(Thr) + L-threonine + ATP = L-threonyl-tRNA(Thr) + AMP + diphosphate + H(+). Functionally, catalyzes the attachment of threonine to tRNA(Thr) in a two-step reaction: L-threonine is first activated by ATP to form Thr-AMP and then transferred to the acceptor end of tRNA(Thr). Also edits incorrectly charged L-seryl-tRNA(Thr). The protein is Threonine--tRNA ligase of Corynebacterium jeikeium (strain K411).